The primary structure comprises 53 residues: Photosystem II reaction center protein K (53 aa).

Residues 1–16 constitute a propeptide that is removed on maturation; the sequence is MLKFYLENVFHLIFFA. The chain crosses the membrane as a helical span at residues 28 to 48; it reads IVNVMPIIPLFFFLLAFVWQA.

This sequence belongs to the PsbK family. PSII is composed of 1 copy each of membrane proteins PsbA, PsbB, PsbC, PsbD, PsbE, PsbF, PsbH, PsbI, PsbJ, PsbK, PsbL, PsbM, PsbT, PsbX, PsbY, PsbZ, Psb30/Ycf12, at least 3 peripheral proteins of the oxygen-evolving complex and a large number of cofactors. It forms dimeric complexes.

It is found in the plastid. The protein resides in the chloroplast thylakoid membrane. Functionally, one of the components of the core complex of photosystem II (PSII). PSII is a light-driven water:plastoquinone oxidoreductase that uses light energy to abstract electrons from H(2)O, generating O(2) and a proton gradient subsequently used for ATP formation. It consists of a core antenna complex that captures photons, and an electron transfer chain that converts photonic excitation into a charge separation. This is Photosystem II reaction center protein K from Huperzia lucidula (Shining clubmoss).